The primary structure comprises 716 residues: DNA ligase (716 aa).

Residues 47–51 (DATYD), 96–97 (SL), and E130 each bind NAD(+). The active-site N6-AMP-lysine intermediate is K132. NAD(+) contacts are provided by R153, E190, K306, and K330. C435, C438, C453, and C459 together coordinate Zn(2+). Residues 638–716 (RSDSAVAGKT…EDEWLKLIEG (79 aa)) form the BRCT domain.

Belongs to the NAD-dependent DNA ligase family. LigA subfamily. It depends on Mg(2+) as a cofactor. Mn(2+) serves as cofactor.

It carries out the reaction NAD(+) + (deoxyribonucleotide)n-3'-hydroxyl + 5'-phospho-(deoxyribonucleotide)m = (deoxyribonucleotide)n+m + AMP + beta-nicotinamide D-nucleotide.. In terms of biological role, DNA ligase that catalyzes the formation of phosphodiester linkages between 5'-phosphoryl and 3'-hydroxyl groups in double-stranded DNA using NAD as a coenzyme and as the energy source for the reaction. It is essential for DNA replication and repair of damaged DNA. The chain is DNA ligase from Nitrobacter winogradskyi (strain ATCC 25391 / DSM 10237 / CIP 104748 / NCIMB 11846 / Nb-255).